The sequence spans 275 residues: Large ribosomal subunit protein uL2 (275 aa).

Residues 223-275 (VAMNPVDHPHGGGEGRTGEAREPVSPWGTPSKGFKTRRNKRTNNMIVQRRKRK) are disordered. Residues 229 to 244 (DHPHGGGEGRTGEARE) show a composition bias toward basic and acidic residues.

It belongs to the universal ribosomal protein uL2 family. As to quaternary structure, part of the 50S ribosomal subunit. Forms a bridge to the 30S subunit in the 70S ribosome.

One of the primary rRNA binding proteins. Required for association of the 30S and 50S subunits to form the 70S ribosome, for tRNA binding and peptide bond formation. It has been suggested to have peptidyltransferase activity; this is somewhat controversial. Makes several contacts with the 16S rRNA in the 70S ribosome. The sequence is that of Large ribosomal subunit protein uL2 from Bordetella petrii (strain ATCC BAA-461 / DSM 12804 / CCUG 43448).